Reading from the N-terminus, the 2529-residue chain is Zinc finger FYVE domain-containing protein 26 (2529 aa).

Disordered stretches follow at residues 584–650 (HLPE…PGPH), 689–709 (SSHRTPEETKLPEDQSCSAAR), and 733–810 (VTSN…RFQT). 2 positions are modified to phosphoserine: Ser605 and Ser609. Residues 689–701 (SSHRTPEETKLPE) are compositionally biased toward basic and acidic residues. A compositionally biased stretch (basic residues) spans 755–765 (SSLRRGRRTRR). Low complexity predominate over residues 778–796 (SLEGTSSELSTSTSEGSLS). Phosphoserine is present on Ser791. The span at 797–810 (AVSGQVESDSRFQT) shows a compositional bias: polar residues. Residues 859-884 (MFVERYQEVIQELARVEHKIENQNSD) are a coiled coil. The disordered stretch occupies residues 1258 to 1286 (GLPLSTLGSPRPSENPSAERKSHSSPKDS). The segment covering 1263-1273 (TLGSPRPSENP) has biased composition (polar residues). The span at 1274–1283 (SAERKSHSSP) shows a compositional bias: basic and acidic residues. Positions 1488 to 1515 (VSDMAVQEELKSELQRKLMELRVYQKIL) form a coiled coil. 4 positions are modified to phosphoserine: Ser1732, Ser1754, Ser1770, and Ser1772. The disordered stretch occupies residues 1762 to 1799 (APGSALVRSPSPKERAFPQTQPPVEFVPPETPPARDQW). The segment at 1802–1862 (DETESVCMVC…VCDQCYSYYN (61 aa)) adopts an FYVE-type zinc-finger fold. 8 residues coordinate Zn(2+): Cys1808, Cys1811, Cys1825, Cys1828, Cys1833, Cys1836, Cys1854, and Cys1857. A disordered region spans residues 1865–1884 (TPEESPCQSEVPDSAKNESP).

Belongs to the ZFYVE26 family. As to quaternary structure, interacts with AP5Z1, AP5B1, AP5S1 and SPG11. Interacts with TTC19 and KIF13A.

The protein localises to the cytoplasm. The protein resides in the cytoskeleton. It localises to the microtubule organizing center. Its subcellular location is the centrosome. It is found in the midbody. Functionally, phosphatidylinositol 3-phosphate-binding protein required for the abscission step in cytokinesis: recruited to the midbody during cytokinesis and acts as a regulator of abscission. May also be required for efficient homologous recombination DNA double-strand break repair. This is Zinc finger FYVE domain-containing protein 26 (Zfyve26) from Mus musculus (Mouse).